The sequence spans 286 residues: Elongation factor Ts (286 aa).

An involved in Mg(2+) ion dislocation from EF-Tu region spans residues 82-85 (TDFV).

This sequence belongs to the EF-Ts family.

It localises to the cytoplasm. Its function is as follows. Associates with the EF-Tu.GDP complex and induces the exchange of GDP to GTP. It remains bound to the aminoacyl-tRNA.EF-Tu.GTP complex up to the GTP hydrolysis stage on the ribosome. This Hamiltonella defensa subsp. Acyrthosiphon pisum (strain 5AT) protein is Elongation factor Ts.